We begin with the raw amino-acid sequence, 147 residues long: Protein MGF 100-3L (147 aa).

Belongs to the asfivirus MGF 100 family.

Functionally, plays a role in virus cell tropism, and may be required for efficient virus replication in macrophages. This chain is Protein MGF 100-3L, found in African swine fever virus (isolate Tick/Malawi/Lil 20-1/1983) (ASFV).